The following is a 215-amino-acid chain: MTKLTARQQQVFDLIRRAIERSGFPPTRAEIAAELGFSSPNAAEEHLRALARKGVIELAAGASRGIRLLGIDDMPHQFTLPHAGLMQLSLPLVGRVAAGSPILAQEHISQHYACDPALFTSKPDYLLKVRGLSMRDAGILDGDLLAVQKRTEAKDGQIIVARLGDDVTVKRLMRRPGGIELIAENPDYENIFVKAGSAEFALEGIAVGLIRSGEL.

The H-T-H motif DNA-binding region spans 28-48 (RAEIAAELGFSSPNAAEEHLR). Residues Ser-133 and Lys-170 each act as for autocatalytic cleavage activity in the active site.

The protein belongs to the peptidase S24 family. As to quaternary structure, homodimer.

The enzyme catalyses Hydrolysis of Ala-|-Gly bond in repressor LexA.. Functionally, represses a number of genes involved in the response to DNA damage (SOS response), including recA and lexA. In the presence of single-stranded DNA, RecA interacts with LexA causing an autocatalytic cleavage which disrupts the DNA-binding part of LexA, leading to derepression of the SOS regulon and eventually DNA repair. The chain is LexA repressor from Burkholderia vietnamiensis (strain G4 / LMG 22486) (Burkholderia cepacia (strain R1808)).